Here is a 146-residue protein sequence, read N- to C-terminus: DNA protection during starvation protein 2 (146 aa).

The Fe cation site is built by His27, Asp54, and Glu58.

Belongs to the Dps family. In terms of assembly, the 12 subunits form a hollow sphere into which the mineral iron core of up to 500 Fe(3+) can be deposited. Homododecamer.

It localises to the cytoplasm. It carries out the reaction 2 Fe(2+) + H2O2 + 2 H(+) = 2 Fe(3+) + 2 H2O. Protects DNA from oxidative damage by sequestering intracellular Fe(2+) ion and storing it in the form of Fe(3+) oxyhydroxide mineral. One hydrogen peroxide oxidizes two Fe(2+) ions, which prevents hydroxyl radical production by the Fenton reaction. It is capable of binding and sequestering Fe(2+) ion. Does not bind DNA. This chain is DNA protection during starvation protein 2 (dps2), found in Bacillus anthracis.